The chain runs to 316 residues: Olfactory receptor 2AG1 (316 aa).

At 1–25 the chain is on the extracellular side; it reads MELWNFTLGSGFILVGILNDSGSPE. N-linked (GlcNAc...) asparagine glycans are attached at residues N5 and N19. Residues 26-49 traverse the membrane as a helical segment; that stretch reads LLCATITILYLLALISNGLLLLAI. Residues 50–57 are Cytoplasmic-facing; sequence TMEARLHM. The helical transmembrane segment at 58-79 threads the bilayer; it reads PMYLLLGQLSLMDLLFTSVVTP. At 80-100 the chain is on the extracellular side; that stretch reads KALADFLRRENTISFGGCALQ. The cysteines at positions 97 and 189 are disulfide-linked. The chain crosses the membrane as a helical span at residues 101–120; that stretch reads MFLALTMGGAEDLLLAFMAY. At 121–139 the chain is on the cytoplasmic side; that stretch reads DRYVAICHPLTYMTLMSSR. Residues 140–158 traverse the membrane as a helical segment; the sequence is ACWLMVATSWILASLSALI. Over 159–195 the chain is Extracellular; that stretch reads YTVYTMHYPFCRAQEIRHLLCEIPHLLKVACADTSRY. The chain crosses the membrane as a helical span at residues 196–219; that stretch reads ELMVYVMGVTFLIPSLAAILASYT. The Cytoplasmic portion of the chain corresponds to 220 to 236; the sequence is QILLTVLHMPSNEGRKK. A helical membrane pass occupies residues 237–259; the sequence is ALVTCSSHLTVVGMFYGAATFMY. At 260-272 the chain is on the extracellular side; sequence VLPSSFHSTRQDN. Residues 273-292 traverse the membrane as a helical segment; the sequence is IISVFYTIVTPALNPLIYSL. Residues 293 to 316 are Cytoplasmic-facing; it reads RNKEVMRALRRVLGKYMLPAHSTL.

Belongs to the G-protein coupled receptor 1 family.

The protein localises to the cell membrane. Functionally, odorant receptor. In Homo sapiens (Human), this protein is Olfactory receptor 2AG1 (OR2AG1).